The primary structure comprises 257 residues: 3-deoxy-manno-octulosonate cytidylyltransferase (257 aa).

The protein belongs to the KdsB family.

It localises to the cytoplasm. It carries out the reaction 3-deoxy-alpha-D-manno-oct-2-ulosonate + CTP = CMP-3-deoxy-beta-D-manno-octulosonate + diphosphate. It functions in the pathway nucleotide-sugar biosynthesis; CMP-3-deoxy-D-manno-octulosonate biosynthesis; CMP-3-deoxy-D-manno-octulosonate from 3-deoxy-D-manno-octulosonate and CTP: step 1/1. It participates in bacterial outer membrane biogenesis; lipopolysaccharide biosynthesis. Activates KDO (a required 8-carbon sugar) for incorporation into bacterial lipopolysaccharide in Gram-negative bacteria. The sequence is that of 3-deoxy-manno-octulosonate cytidylyltransferase from Xylella fastidiosa (strain 9a5c).